The primary structure comprises 270 residues: ATP synthase subunit a (270 aa).

5 consecutive transmembrane segments (helical) span residues 37-57 (NVHIDSLFFSVLTGMLFLWVF), 98-118 (VAPLALTIFCWVILMNLMDLI), 143-163 (DVNITMAMALGVFALMIYYSI), 217-237 (VVFILIAAMLPWYLQWVGALP), and 239-259 (AIFHILVILIQAFVFMMLTIV).

The protein belongs to the ATPase A chain family. As to quaternary structure, F-type ATPases have 2 components, CF(1) - the catalytic core - and CF(0) - the membrane proton channel. CF(1) has five subunits: alpha(3), beta(3), gamma(1), delta(1), epsilon(1). CF(0) has three main subunits: a(1), b(2) and c(9-12). The alpha and beta chains form an alternating ring which encloses part of the gamma chain. CF(1) is attached to CF(0) by a central stalk formed by the gamma and epsilon chains, while a peripheral stalk is formed by the delta and b chains.

Its subcellular location is the cell inner membrane. In terms of biological role, key component of the proton channel; it plays a direct role in the translocation of protons across the membrane. This Aliivibrio salmonicida (strain LFI1238) (Vibrio salmonicida (strain LFI1238)) protein is ATP synthase subunit a.